The following is a 332-amino-acid chain: Fructose-1,6-bisphosphatase class 1 (332 aa).

Residues Glu-89, Asp-110, Leu-112, and Asp-113 each coordinate Mg(2+). Residues 113–116 (DGSS), Asn-206, Tyr-239, 257–259 (YLY), and Lys-269 contribute to the substrate site. Residue Glu-275 participates in Mg(2+) binding.

This sequence belongs to the FBPase class 1 family. In terms of assembly, homotetramer. Mg(2+) is required as a cofactor.

The protein localises to the cytoplasm. It catalyses the reaction beta-D-fructose 1,6-bisphosphate + H2O = beta-D-fructose 6-phosphate + phosphate. The protein operates within carbohydrate biosynthesis; gluconeogenesis. The polypeptide is Fructose-1,6-bisphosphatase class 1 (Salmonella gallinarum (strain 287/91 / NCTC 13346)).